A 239-amino-acid chain; its full sequence is Leucyl/phenylalanyl-tRNA--protein transferase (239 aa).

Belongs to the L/F-transferase family.

It is found in the cytoplasm. It catalyses the reaction N-terminal L-lysyl-[protein] + L-leucyl-tRNA(Leu) = N-terminal L-leucyl-L-lysyl-[protein] + tRNA(Leu) + H(+). The catalysed reaction is N-terminal L-arginyl-[protein] + L-leucyl-tRNA(Leu) = N-terminal L-leucyl-L-arginyl-[protein] + tRNA(Leu) + H(+). The enzyme catalyses L-phenylalanyl-tRNA(Phe) + an N-terminal L-alpha-aminoacyl-[protein] = an N-terminal L-phenylalanyl-L-alpha-aminoacyl-[protein] + tRNA(Phe). Functionally, functions in the N-end rule pathway of protein degradation where it conjugates Leu, Phe and, less efficiently, Met from aminoacyl-tRNAs to the N-termini of proteins containing an N-terminal arginine or lysine. This Aliivibrio fischeri (strain MJ11) (Vibrio fischeri) protein is Leucyl/phenylalanyl-tRNA--protein transferase.